Consider the following 364-residue polypeptide: Coproporphyrin III ferrochelatase (364 aa).

2 residues coordinate Fe-coproporphyrin III: R29 and Y118. Fe(2+) is bound by residues H169 and E250.

Belongs to the ferrochelatase family.

It localises to the cytoplasm. The catalysed reaction is Fe-coproporphyrin III + 2 H(+) = coproporphyrin III + Fe(2+). It functions in the pathway porphyrin-containing compound metabolism; protoheme biosynthesis. Its function is as follows. Involved in coproporphyrin-dependent heme b biosynthesis. Catalyzes the insertion of ferrous iron into coproporphyrin III to form Fe-coproporphyrin III. The protein is Coproporphyrin III ferrochelatase of Streptococcus pneumoniae (strain Hungary19A-6).